Consider the following 178-residue polypeptide: Large ribosomal subunit protein uL5 (178 aa).

It belongs to the universal ribosomal protein uL5 family. Part of the 50S ribosomal subunit; part of the 5S rRNA/L5/L18/L25 subcomplex. Contacts the 5S rRNA and the P site tRNA. Forms a bridge to the 30S subunit in the 70S ribosome.

In terms of biological role, this is one of the proteins that bind and probably mediate the attachment of the 5S RNA into the large ribosomal subunit, where it forms part of the central protuberance. In the 70S ribosome it contacts protein S13 of the 30S subunit (bridge B1b), connecting the 2 subunits; this bridge is implicated in subunit movement. Contacts the P site tRNA; the 5S rRNA and some of its associated proteins might help stabilize positioning of ribosome-bound tRNAs. The protein is Large ribosomal subunit protein uL5 of Psychrobacter arcticus (strain DSM 17307 / VKM B-2377 / 273-4).